Here is a 31-residue protein sequence, read N- to C-terminus: Cytochrome b6-f complex subunit 6 (31 aa).

Residues 4–24 (IISYFGFLFGALTLALILFIG) form a helical membrane-spanning segment.

This sequence belongs to the PetL family. In terms of assembly, the 4 large subunits of the cytochrome b6-f complex are cytochrome b6, subunit IV (17 kDa polypeptide, PetD), cytochrome f and the Rieske protein, while the 4 small subunits are PetG, PetL, PetM and PetN. The complex functions as a dimer.

The protein resides in the plastid. Its subcellular location is the chloroplast thylakoid membrane. In terms of biological role, component of the cytochrome b6-f complex, which mediates electron transfer between photosystem II (PSII) and photosystem I (PSI), cyclic electron flow around PSI, and state transitions. PetL is important for photoautotrophic growth as well as for electron transfer efficiency and stability of the cytochrome b6-f complex. The chain is Cytochrome b6-f complex subunit 6 from Physcomitrium patens (Spreading-leaved earth moss).